Here is a 388-residue protein sequence, read N- to C-terminus: Outer membrane protein assembly factor BamB (388 aa).

An N-terminal signal peptide occupies residues 1–21 (MILGWTQRIFTLLVVVTLLAA). The N-palmitoyl cysteine moiety is linked to residue Cys-22. Cys-22 carries the S-diacylglycerol cysteine lipid modification.

Belongs to the BamB family. In terms of assembly, part of the Bam complex.

Its subcellular location is the cell outer membrane. Functionally, part of the outer membrane protein assembly complex, which is involved in assembly and insertion of beta-barrel proteins into the outer membrane. The protein is Outer membrane protein assembly factor BamB of Kangiella koreensis (strain DSM 16069 / JCM 12317 / KCTC 12182 / SW-125).